We begin with the raw amino-acid sequence, 354 residues long: Uroporphyrinogen decarboxylase (354 aa).

Substrate is bound by residues 27–31, D77, Y154, S209, and H327; that span reads RQAGR.

This sequence belongs to the uroporphyrinogen decarboxylase family. In terms of assembly, homodimer.

It localises to the cytoplasm. The catalysed reaction is uroporphyrinogen III + 4 H(+) = coproporphyrinogen III + 4 CO2. Its pathway is porphyrin-containing compound metabolism; protoporphyrin-IX biosynthesis; coproporphyrinogen-III from 5-aminolevulinate: step 4/4. Catalyzes the decarboxylation of four acetate groups of uroporphyrinogen-III to yield coproporphyrinogen-III. The polypeptide is Uroporphyrinogen decarboxylase (Teredinibacter turnerae (strain ATCC 39867 / T7901)).